The primary structure comprises 64 residues: Large ribosomal subunit protein bL28 (64 aa).

Belongs to the bacterial ribosomal protein bL28 family.

The chain is Large ribosomal subunit protein bL28 from Persephonella marina (strain DSM 14350 / EX-H1).